The sequence spans 342 residues: MAVRVAVAGASGYAGGEALRLLLAHPEVEIGALTGNSNAGQKLGALQPHLLPLADRVLQETSPDVLAGHDVVFLALPHGQSAAVAEQLGPDVLVVDMGADFRLRNPADWEKFYGSPHAGTWPYGLPELPGGRAALEGSKRIAVPGCYPTAVSLALFPAYAAALAEPEAVIVAASGTSGAGKAAKPHLLGSEVMGSMSPYGVGGVHRHTPEMIQNLGAAAGEPVSVSFTPTLAPMPRGILATCTAKARAGVTAESVRAAYEKAFADEPFVHLLPEGQWPATASVYGSNAVQVQVAYDAAAQRIIAISAIDNLTKGTAGGALQSMNIALGLPEELGLSTIGVAP.

The active site involves Cys-146.

The protein belongs to the NAGSA dehydrogenase family. Type 1 subfamily.

The protein resides in the cytoplasm. The enzyme catalyses N-acetyl-L-glutamate 5-semialdehyde + phosphate + NADP(+) = N-acetyl-L-glutamyl 5-phosphate + NADPH + H(+). It participates in amino-acid biosynthesis; L-arginine biosynthesis; N(2)-acetyl-L-ornithine from L-glutamate: step 3/4. Catalyzes the NADPH-dependent reduction of N-acetyl-5-glutamyl phosphate to yield N-acetyl-L-glutamate 5-semialdehyde. In Streptomyces avermitilis (strain ATCC 31267 / DSM 46492 / JCM 5070 / NBRC 14893 / NCIMB 12804 / NRRL 8165 / MA-4680), this protein is N-acetyl-gamma-glutamyl-phosphate reductase.